A 22-amino-acid chain; its full sequence is Chitin-binding protein 3 (22 aa).

In terms of processing, glycosylated; contains 2.5% carbohydrates.

In terms of biological role, chitin-binding protein. Has antifungal activity against F.solani, F.oxysporum, C.musae and C.gloesporoides but not against P.oligandrum. Depending on concentration the antifungal activity can be fungistatic or fungicidal. Inhibits both spore germination and mycelial growth in F.solani at a concentration of 0.1 mg/ml. Has antifungal activity against C.krusei, C.albicans, C.tropicalis and C.parapsilosis. Has no chitinase, beta-glucanase or hemagglutinating activity. Acts as a flocculent. The polypeptide is Chitin-binding protein 3 (Moringa oleifera (Horseradish tree)).